We begin with the raw amino-acid sequence, 1343 residues long: DNA-directed RNA polymerase subunit beta (1343 aa).

This sequence belongs to the RNA polymerase beta chain family. As to quaternary structure, the RNAP catalytic core consists of 2 alpha, 1 beta, 1 beta' and 1 omega subunit. When a sigma factor is associated with the core the holoenzyme is formed, which can initiate transcription.

The enzyme catalyses RNA(n) + a ribonucleoside 5'-triphosphate = RNA(n+1) + diphosphate. Its function is as follows. DNA-dependent RNA polymerase catalyzes the transcription of DNA into RNA using the four ribonucleoside triphosphates as substrates. This is DNA-directed RNA polymerase subunit beta from Haemophilus influenzae (strain PittEE).